The primary structure comprises 288 residues: Light-independent protochlorophyllide reductase iron-sulfur ATP-binding protein (288 aa).

Residues 10–15 (GIGKST) and Lys-39 each bind ATP. Ser-14 is a Mg(2+) binding site. [4Fe-4S] cluster is bound by residues Cys-95 and Cys-129. 180 to 181 (NR) contributes to the ATP binding site.

Belongs to the NifH/BchL/ChlL family. As to quaternary structure, homodimer. Protochlorophyllide reductase is composed of three subunits; ChlL, ChlN and ChlB. The cofactor is [4Fe-4S] cluster.

It catalyses the reaction chlorophyllide a + oxidized 2[4Fe-4S]-[ferredoxin] + 2 ADP + 2 phosphate = protochlorophyllide a + reduced 2[4Fe-4S]-[ferredoxin] + 2 ATP + 2 H2O. The protein operates within porphyrin-containing compound metabolism; chlorophyll biosynthesis (light-independent). Its function is as follows. Component of the dark-operative protochlorophyllide reductase (DPOR) that uses Mg-ATP and reduced ferredoxin to reduce ring D of protochlorophyllide (Pchlide) to form chlorophyllide a (Chlide). This reaction is light-independent. The L component serves as a unique electron donor to the NB-component of the complex, and binds Mg-ATP. The polypeptide is Light-independent protochlorophyllide reductase iron-sulfur ATP-binding protein (Trichodesmium erythraeum (strain IMS101)).